Reading from the N-terminus, the 101-residue chain is Small ribosomal subunit protein uS14 (101 aa).

This sequence belongs to the universal ribosomal protein uS14 family. Part of the 30S ribosomal subunit. Contacts proteins S3 and S10.

In terms of biological role, binds 16S rRNA, required for the assembly of 30S particles and may also be responsible for determining the conformation of the 16S rRNA at the A site. The protein is Small ribosomal subunit protein uS14 of Shewanella frigidimarina (strain NCIMB 400).